A 421-amino-acid polypeptide reads, in one-letter code: MVYIDNIAAQEVLDSRGNPTVKATVILSDGTVASAIVPSGASTGKREALELRDGDDRFGGKGVLKACENVEVAIADELVGLSPYNQAEIDAIMKELDGTNNYSKLGANAVLGVSMAVARAAAKSLHMPLYRYLGGANGVIVPTPMLNIINGGAHADNDVDLQEYMIMPTGFDSFKEALRASAEIYHTLKKLLAEDGHPTALGDEGGFAPNFKNNEEPIEYILKAIEKAGYKPADEVNIALDAASSEFYKDGKYELKGDNKVLSAEELAEFYADLVAKYPIVSLEDGMAEDDWEGWKILTEKLGDKIQLVGDDLFVTNKTILAEGIEKGIANAILIKPNQIGSVSETMQTVRLAQRNGYNCVMSHRSGESEDAFIADFAVALNTAQIKTGAPARGERTAKYNRLLEIERDLLYPEYIGKELF.

Gln162 is a (2R)-2-phosphoglycerate binding site. Residue Glu204 is the Proton donor of the active site. Positions 241, 284, and 311 each coordinate Mg(2+). Residues Lys336, Arg365, Ser366, and Lys387 each coordinate (2R)-2-phosphoglycerate. Lys336 serves as the catalytic Proton acceptor.

It belongs to the enolase family. The cofactor is Mg(2+).

Its subcellular location is the cytoplasm. It is found in the secreted. It localises to the cell surface. It carries out the reaction (2R)-2-phosphoglycerate = phosphoenolpyruvate + H2O. It functions in the pathway carbohydrate degradation; glycolysis; pyruvate from D-glyceraldehyde 3-phosphate: step 4/5. Functionally, catalyzes the reversible conversion of 2-phosphoglycerate (2-PG) into phosphoenolpyruvate (PEP). It is essential for the degradation of carbohydrates via glycolysis. In Nitratiruptor sp. (strain SB155-2), this protein is Enolase.